A 411-amino-acid chain; its full sequence is Aspartokinase (411 aa).

7–10 (KFGG) provides a ligand contact to ATP. Substrate is bound at residue 25–30 (RVIEEK). Ser-41 serves as a coordination point for ATP. Substrate contacts are provided by residues 47-49 (TDE), Glu-74, 125-126 (LN), 150-153 (RGGS), and Ser-153. Residues 173-174 (TD) and 179-184 (FTTDPR) each bind ATP. ACT domains follow at residues 264–338 (VTVF…SETG) and 344–411 (IVGS…KSER). Residues 289–291 (NVD), Gln-295, 355–356 (VA), 369–370 (QV), and 376–377 (SE) each bind substrate.

Belongs to the aspartokinase family. In terms of assembly, tetramer consisting of 2 isoforms Alpha (catalytic and regulation) and of a homodimer of 2 isoforms Beta (regulation).

It carries out the reaction L-aspartate + ATP = 4-phospho-L-aspartate + ADP. Its pathway is amino-acid biosynthesis; L-lysine biosynthesis via DAP pathway; (S)-tetrahydrodipicolinate from L-aspartate: step 1/4. It functions in the pathway amino-acid biosynthesis; L-methionine biosynthesis via de novo pathway; L-homoserine from L-aspartate: step 1/3. The protein operates within amino-acid biosynthesis; L-threonine biosynthesis; L-threonine from L-aspartate: step 1/5. With respect to regulation, lysine-sensitive. In terms of biological role, catalyzes the phosphorylation of the beta-carboxyl group of aspartic acid with ATP to yield 4-phospho-L-aspartate, which is involved in the branched biosynthetic pathway leading to the biosynthesis of amino acids threonine, isoleucine and methionine. This Bacillus sp. (strain MGA3) protein is Aspartokinase (lysC).